Here is a 213-residue protein sequence, read N- to C-terminus: MRTHVVDHPLVAHKLTHLRNEETDSPTFRRLADELVTLLAYEATRDVRVEPIDVVTPVSPTTGVQLAKPRPLVVPILRAGLGMLDGMMRLLPTAEVGFLGMIRNEETLQASTYAERLPEDLSGRQCYVLDPMLATGGTLAAAIRFLTDRGADHITAICLLAAPEGCARLEQELDGLDVPVTIVTAAMDERLNEKGYIVPGLGDAGDRLYGIVG.

5-phospho-alpha-D-ribose 1-diphosphate is bound by residues arginine 78, arginine 103, and 130-138; that span reads DPMLATGGT. Uracil is bound by residues isoleucine 197 and 202–204; that span reads GDA. Aspartate 203 is a 5-phospho-alpha-D-ribose 1-diphosphate binding site.

This sequence belongs to the UPRTase family. The cofactor is Mg(2+).

The catalysed reaction is UMP + diphosphate = 5-phospho-alpha-D-ribose 1-diphosphate + uracil. It functions in the pathway pyrimidine metabolism; UMP biosynthesis via salvage pathway; UMP from uracil: step 1/1. With respect to regulation, allosterically activated by GTP. Catalyzes the conversion of uracil and 5-phospho-alpha-D-ribose 1-diphosphate (PRPP) to UMP and diphosphate. In Nocardioides sp. (strain ATCC BAA-499 / JS614), this protein is Uracil phosphoribosyltransferase.